The following is a 257-amino-acid chain: HTH-type transcriptional activator mta (257 aa).

The HTH merR-type domain maps to 2–71 (KYQVKQVAEI…LDEIKEMLDH (70 aa)). Positions 5–24 (VKQVAEISGVSIRTLHHYDN) form a DNA-binding region, H-T-H motif. Residues 71-74 (HPNF) are hinge. The essential for dimerization stretch occupies residues 76 to 104 (RKAALQSQKEILMKKKQRMDEMIQTIDRT). A coiled-coil region spans residues 76–107 (RKAALQSQKEILMKKKQRMDEMIQTIDRTLLS).

Homodimer.

It is found in the cytoplasm. Functionally, global transcriptional regulator that activates transcription of bmr and blt by binding directly to their promoter. Also stimulates the expression of the mta gene itself, ydfK and ymfE. The sequence is that of HTH-type transcriptional activator mta (mta) from Bacillus subtilis (strain 168).